A 288-amino-acid polypeptide reads, in one-letter code: MALFQKKKYIKINPNRSIIEKQAEHPEVPDELFAKCPACKHTIYQKDLGKNKVCPNCDYNFRITAKERLAIVADKDSFVEMFTGIDSKNPLDFPGYPEKLAATKARTGLDEAIMTGVATIKGQKTALAIMDSTFIMASMGTVVGEKLTRLFEHATTEKLPIIVFTASGGARMQEGIMSLMQMAKTSAAVKRHSNAGLFYITVLTDPTTGGVTASFASLGDIILAEPQSLIGFAGRRVIEQTVRQTLPDDFQKAEFLLNHGFVDAIVKRNELRQKLALLLELHTEVENV.

Positions 32–288 (LFAKCPACKH…LELHTEVENV (257 aa)) constitute a CoA carboxyltransferase N-terminal domain. The Zn(2+) site is built by Cys-36, Cys-39, Cys-54, and Cys-57. Residues 36 to 57 (CPACKHTIYQKDLGKNKVCPNC) form a C4-type zinc finger.

The protein belongs to the AccD/PCCB family. In terms of assembly, acetyl-CoA carboxylase is a heterohexamer composed of biotin carboxyl carrier protein (AccB), biotin carboxylase (AccC) and two subunits each of ACCase subunit alpha (AccA) and ACCase subunit beta (AccD). Zn(2+) serves as cofactor.

The protein localises to the cytoplasm. The catalysed reaction is N(6)-carboxybiotinyl-L-lysyl-[protein] + acetyl-CoA = N(6)-biotinyl-L-lysyl-[protein] + malonyl-CoA. It participates in lipid metabolism; malonyl-CoA biosynthesis; malonyl-CoA from acetyl-CoA: step 1/1. Its function is as follows. Component of the acetyl coenzyme A carboxylase (ACC) complex. Biotin carboxylase (BC) catalyzes the carboxylation of biotin on its carrier protein (BCCP) and then the CO(2) group is transferred by the transcarboxylase to acetyl-CoA to form malonyl-CoA. This Lactococcus lactis subsp. cremoris (strain SK11) protein is Acetyl-coenzyme A carboxylase carboxyl transferase subunit beta.